Reading from the N-terminus, the 335-residue chain is Pregnancy-specific beta-1-glycoprotein 11 (335 aa).

A signal peptide spans 1–34 (MGPLSAPPCTEHIKWKGLLLTALLLNFWNLPTTA). An Ig-like V-type domain is found at 35–144 (QVMIEAQPPK…TGYFTFTLYL (110 aa)). 3 N-linked (GlcNAc...) asparagine glycosylation sites follow: asparagine 61, asparagine 104, and asparagine 111. The Cell attachment site signature appears at 127–129 (RGD). Ig-like C2-type domains lie at 147-234 (PKPS…VTLN) and 242-317 (PRIF…TSLT). Disulfide bonds link cysteine 169–cysteine 217 and cysteine 261–cysteine 301.

This sequence belongs to the immunoglobulin superfamily. CEA family.

Its subcellular location is the secreted. The sequence is that of Pregnancy-specific beta-1-glycoprotein 11 (PSG11) from Homo sapiens (Human).